The sequence spans 305 residues: MQRPDMSVAVAGIKMRNPVMTASGTFGYGAEFADYLDLECIGAMISKGLSLKPKAGNPTPRIVETPGGMLNAIGLQNVGIDAFIEQKLPYLKNVNTPVIVNLYGNTLEEYGEVAARLDGLSGVAGIEVNISCPNVKQGGIVFGTDPGAAQEVVRLVKKNTTKPMIVKLSPNVTDVVLMAKACADAGADALSLINTLTGMAIDLERRRPVLANVTGGLSGPAIKPVALRMVWQVAKAVKLPLIGIGGIMNGRDALEFMLAGATAVQVGTASFLDPSAAQRIAREMEQYLVDHKIESVSSLIGALEL.

FMN contacts are provided by residues serine 23 and 47 to 48 (KG). Substrate-binding positions include lysine 47 and 71–75 (NAIGL). FMN-binding residues include asparagine 101 and asparagine 129. Asparagine 129 contacts substrate. Cysteine 132 acts as the Nucleophile in catalysis. FMN is bound by residues lysine 167 and isoleucine 193. Substrate is bound at residue 194–195 (NT). Residues glycine 219, 245 to 246 (GG), and 267 to 268 (GT) each bind FMN.

The protein belongs to the dihydroorotate dehydrogenase family. Type 1 subfamily. Heterotetramer of 2 PyrK and 2 PyrD type B subunits. FMN is required as a cofactor.

It localises to the cytoplasm. The enzyme catalyses (S)-dihydroorotate + NAD(+) = orotate + NADH + H(+). Its pathway is pyrimidine metabolism; UMP biosynthesis via de novo pathway; orotate from (S)-dihydroorotate (NAD(+) route): step 1/1. Catalyzes the conversion of dihydroorotate to orotate with NAD(+) as electron acceptor. The chain is Dihydroorotate dehydrogenase B (NAD(+)), catalytic subunit (pyrD) from Citrifermentans bemidjiense (strain ATCC BAA-1014 / DSM 16622 / JCM 12645 / Bem) (Geobacter bemidjiensis).